We begin with the raw amino-acid sequence, 252 residues long: Probable oligoribonuclease (252 aa).

The Exonuclease domain maps to 81–241 (VWIDCEMTGL…ALSDILESIG (161 aa)). The active site involves Tyr202.

It belongs to the oligoribonuclease family.

The protein localises to the cytoplasm. Its subcellular location is the nucleus. In terms of biological role, 3'-to-5' exoribonuclease specific for small oligoribonucleotides. This chain is Probable oligoribonuclease (rex2), found in Schizosaccharomyces pombe (strain 972 / ATCC 24843) (Fission yeast).